The following is a 757-amino-acid chain: Chloride channel protein C (757 aa).

Residues 1 to 96 (MGSSLNKPLS…LHLKKTFGKW (96 aa)) lie on the Cytoplasmic side of the membrane. 11 consecutive transmembrane segments (helical) span residues 97–117 (IICL…KMVV), 141–161 (FLTF…MVIV), 196–216 (IVSL…GPMI), 253–273 (FISI…IGGV), 292–312 (TFFT…GIGS), 337–357 (LLCF…FVFL), 378–398 (FEAL…SFIF), 462–482 (LLVF…LWVA), 484–504 (GLFV…GQTI), 506–526 (MWFT…AMMA), and 535–555 (IVVI…IILA). 2 consecutive CBS domains span residues 600–667 (MSKN…TGEE) and 710–757 (MNSS…NDLF).

It belongs to the chloride channel (TC 2.A.49) family.

It is found in the membrane. In terms of biological role, voltage-gated chloride channel. Chloride channels may have several functions including the regulation of cell volume, membrane potential stabilization and signal transduction. The protein is Chloride channel protein C (clcC) of Dictyostelium discoideum (Social amoeba).